We begin with the raw amino-acid sequence, 420 residues long: Outer capsid protein P8 (420 aa).

The protein belongs to the phytoreovirus outer capsid protein P8 family. Homotrimer. Homomultimer. Interacts with host peroxisomal glycolate oxidase (GOX). This interaction mediates its relocation to virus factories peripheral to host peroxisomes.

It is found in the virion. Its subcellular location is the host cytoplasm. In terms of biological role, capsid protein which self-assembles to form the outer icosahedral capsid with a T=13 symmetry, about 70 nm in diameter and consisting of 780 molecules capsid proteins. The sequence is that of Outer capsid protein P8 from Alopecurus aequalis (Barnyard grass).